The chain runs to 630 residues: Probable potassium transport system protein Kup 2 (630 aa).

Helical transmembrane passes span 14-34 (ATGF…DIGT), 56-76 (VIVL…VTAK), 108-128 (VPLL…SMIT), 145-165 (PALQ…LFAF), 176-196 (AFGP…LLHI), 214-234 (FMLS…LAVT), 255-275 (WLFF…AMVL), 293-313 (LLVP…QAVI), 352-372 (MLLL…SALA), 375-395 (YGIA…VVVW), 402-422 (PAAA…FFSA), and 427-447 (LMEG…LVWT).

This sequence belongs to the HAK/KUP transporter (TC 2.A.72) family.

It is found in the cell inner membrane. The catalysed reaction is K(+)(in) + H(+)(in) = K(+)(out) + H(+)(out). Functionally, transport of potassium into the cell. Likely operates as a K(+):H(+) symporter. The polypeptide is Probable potassium transport system protein Kup 2 (Rhodopseudomonas palustris (strain BisA53)).